We begin with the raw amino-acid sequence, 465 residues long: Ribulose bisphosphate carboxylase large chain (465 aa).

Position 4 is an N6,N6,N6-trimethyllysine (Lys4). Asn113 and Thr163 together coordinate substrate. The active-site Proton acceptor is the Lys165. Residue Lys167 coordinates substrate. Positions 191, 193, and 194 each coordinate Mg(2+). Position 191 is an N6-carboxylysine (Lys191). His284 functions as the Proton acceptor in the catalytic mechanism. Substrate is bound by residues Arg285, His317, and Ser369.

The protein belongs to the RuBisCO large chain family. Type I subfamily. In terms of assembly, heterohexadecamer of 8 large chains and 8 small chains; disulfide-linked. The disulfide link is formed within the large subunit homodimers. It depends on Mg(2+) as a cofactor. The disulfide bond which can form in the large chain dimeric partners within the hexadecamer appears to be associated with oxidative stress and protein turnover.

It localises to the plastid. The protein localises to the chloroplast. It carries out the reaction 2 (2R)-3-phosphoglycerate + 2 H(+) = D-ribulose 1,5-bisphosphate + CO2 + H2O. The enzyme catalyses D-ribulose 1,5-bisphosphate + O2 = 2-phosphoglycolate + (2R)-3-phosphoglycerate + 2 H(+). In terms of biological role, ruBisCO catalyzes two reactions: the carboxylation of D-ribulose 1,5-bisphosphate, the primary event in carbon dioxide fixation, as well as the oxidative fragmentation of the pentose substrate in the photorespiration process. Both reactions occur simultaneously and in competition at the same active site. This Cornus oblonga protein is Ribulose bisphosphate carboxylase large chain.